Consider the following 194-residue polypeptide: Imidazoleglycerol-phosphate dehydratase (194 aa).

This sequence belongs to the imidazoleglycerol-phosphate dehydratase family.

The protein localises to the cytoplasm. It carries out the reaction D-erythro-1-(imidazol-4-yl)glycerol 3-phosphate = 3-(imidazol-4-yl)-2-oxopropyl phosphate + H2O. The protein operates within amino-acid biosynthesis; L-histidine biosynthesis; L-histidine from 5-phospho-alpha-D-ribose 1-diphosphate: step 6/9. This chain is Imidazoleglycerol-phosphate dehydratase, found in Listeria monocytogenes serovar 1/2a (strain ATCC BAA-679 / EGD-e).